Here is a 78-residue protein sequence, read N- to C-terminus: Large ribosomal subunit protein bL28 (78 aa).

Belongs to the bacterial ribosomal protein bL28 family.

This chain is Large ribosomal subunit protein bL28, found in Leifsonia xyli subsp. xyli (strain CTCB07).